Reading from the N-terminus, the 492-residue chain is Protein nucleotidyltransferase YdiU (492 aa).

ATP contacts are provided by Gly-88, Gly-90, Arg-91, Lys-111, Asp-123, Gly-124, Arg-174, and Arg-181. Asp-250 (proton acceptor) is an active-site residue. Mg(2+) is bound by residues Asn-251 and Asp-260. Asp-260 serves as a coordination point for ATP.

It belongs to the SELO family. Requires Mg(2+) as cofactor. Mn(2+) is required as a cofactor.

It catalyses the reaction L-seryl-[protein] + ATP = 3-O-(5'-adenylyl)-L-seryl-[protein] + diphosphate. It carries out the reaction L-threonyl-[protein] + ATP = 3-O-(5'-adenylyl)-L-threonyl-[protein] + diphosphate. The catalysed reaction is L-tyrosyl-[protein] + ATP = O-(5'-adenylyl)-L-tyrosyl-[protein] + diphosphate. The enzyme catalyses L-histidyl-[protein] + UTP = N(tele)-(5'-uridylyl)-L-histidyl-[protein] + diphosphate. It catalyses the reaction L-seryl-[protein] + UTP = O-(5'-uridylyl)-L-seryl-[protein] + diphosphate. It carries out the reaction L-tyrosyl-[protein] + UTP = O-(5'-uridylyl)-L-tyrosyl-[protein] + diphosphate. In terms of biological role, nucleotidyltransferase involved in the post-translational modification of proteins. It can catalyze the addition of adenosine monophosphate (AMP) or uridine monophosphate (UMP) to a protein, resulting in modifications known as AMPylation and UMPylation. In Rhodopseudomonas palustris (strain TIE-1), this protein is Protein nucleotidyltransferase YdiU.